Consider the following 671-residue polypeptide: MAVEQIDKMAAKAGEATNKWIKPQQPLLTLLLLLATFSQLPAVCSSSILDAASLQEKDPLRDTSMNMIQRNYMVMHSASGSGDHSRSLKRANLANTSITCNDGSHAGFYLRKHPSSKKWIVLLEGGWHCFDVRSCRSRWMRLRHLMTSSQWPETRDVGGILSPHPEENPYWHNANHVLIPYCSSDSWSGTRTEPDTSDRENSWRFMGALILRQVIAELIPVGLGRVPGGELMLVGSSAGGMGVMLNLDRIRDFLVNEKKLQITVRGVSDSGWFLDREPYTPAAVASNEAVRQGWKLWQGLLPEECTKSYPTEPWRCYYGYRLYPTLKTPLFVFQWLFDEAQMRVDNVGAPVTPQQWNYIHEMGGALRSSLDNVSAVFAPSCIGHGVLFKRDWVNIKIDDISLPSALRCWEHSTRSRRHDKLKRSTEPSTAVSHPEHANNQRHQRHRQRLQRQKHNNVAQSGGQQRKHNHLSKEEREERKRLRQEQRQRRKQRRRQQQQKKANGGQEHRNKKDNSPKSSNGNDQRKQRRRQQLTAEERQEQRKRRRKAQQQQMKMQREQPAAGVFLEASAPQKTRSSNNASAGTKSKKRHRVPRVPEKCGLRLLERCSWPQCNHSCPTLTNPMTGEEMRFLELLTAFGLDIEAVAAALGVDMHTLNNMERTELVNMLTQQAN.

Residues 1-46 (MAVEQIDKMAAKAGEATNKWIKPQQPLLTLLLLLATFSQLPAVCSS) form the signal peptide. Asparagine 95 carries N-linked (GlcNAc...) asparagine glycosylation. Residues serine 237 and aspartate 338 each act as charge relay system in the active site. Asparagine 372 carries N-linked (GlcNAc...) asparagine glycosylation. The active-site Charge relay system is histidine 384. The segment at 411-592 (HSTRSRRHDK…TKSKKRHRVP (182 aa)) is disordered. Over residues 439–454 (NQRHQRHRQRLQRQKH) the composition is skewed to basic residues. A compositionally biased stretch (basic and acidic residues) spans 470–486 (LSKEEREERKRLRQEQR). A compositionally biased stretch (basic residues) spans 487–497 (QRRKQRRRQQQ). Residues 505-514 (QEHRNKKDNS) show a composition bias toward basic and acidic residues. Positions 570–583 (PQKTRSSNNASAGT) are enriched in polar residues. N-linked (GlcNAc...) asparagine glycosylation is found at asparagine 578 and asparagine 612.

Belongs to the pectinacetylesterase family. Notum subfamily.

The protein resides in the secreted. Its subcellular location is the cell surface. It catalyses the reaction [Wnt protein]-O-(9Z)-hexadecenoyl-L-serine + H2O = [Wnt protein]-L-serine + (9Z)-hexadecenoate + H(+). In terms of biological role, carboxylesterase that acts as a key negative regulator of the Wnt signaling pathway by specifically mediating depalmitoleoylation of WNT proteins. Serine palmitoleoylation of WNT proteins is required for efficient binding to frizzled receptors. Also acts as a regulator of long-range activity of Hedgehog (hh), possibly by regulating the switch between low and high level hh pathway signaling. The chain is Palmitoleoyl-protein carboxylesterase NOTUM from Drosophila melanogaster (Fruit fly).